We begin with the raw amino-acid sequence, 100 residues long: Urease subunit gamma (100 aa).

Belongs to the urease gamma subunit family. Heterotrimer of UreA (gamma), UreB (beta) and UreC (alpha) subunits. Three heterotrimers associate to form the active enzyme.

Its subcellular location is the cytoplasm. It catalyses the reaction urea + 2 H2O + H(+) = hydrogencarbonate + 2 NH4(+). The protein operates within nitrogen metabolism; urea degradation; CO(2) and NH(3) from urea (urease route): step 1/1. The protein is Urease subunit gamma of Mesorhizobium japonicum (strain LMG 29417 / CECT 9101 / MAFF 303099) (Mesorhizobium loti (strain MAFF 303099)).